We begin with the raw amino-acid sequence, 215 residues long: FMN-dependent NADH:quinone oxidoreductase 1 (215 aa).

It belongs to the azoreductase type 1 family. Homodimer. FMN is required as a cofactor.

It catalyses the reaction 2 a quinone + NADH + H(+) = 2 a 1,4-benzosemiquinone + NAD(+). It carries out the reaction N,N-dimethyl-1,4-phenylenediamine + anthranilate + 2 NAD(+) = 2-(4-dimethylaminophenyl)diazenylbenzoate + 2 NADH + 2 H(+). Quinone reductase that provides resistance to thiol-specific stress caused by electrophilic quinones. Its function is as follows. Also exhibits azoreductase activity. Catalyzes the reductive cleavage of the azo bond in aromatic azo compounds to the corresponding amines. The sequence is that of FMN-dependent NADH:quinone oxidoreductase 1 from Lactiplantibacillus plantarum (strain ATCC BAA-793 / NCIMB 8826 / WCFS1) (Lactobacillus plantarum).